A 132-amino-acid chain; its full sequence is Small ribosomal subunit protein uS11 (132 aa).

The protein belongs to the universal ribosomal protein uS11 family. Part of the 30S ribosomal subunit. Interacts with proteins S7 and S18. Binds to IF-3.

Located on the platform of the 30S subunit, it bridges several disparate RNA helices of the 16S rRNA. Forms part of the Shine-Dalgarno cleft in the 70S ribosome. The chain is Small ribosomal subunit protein uS11 from Dichelobacter nodosus (strain VCS1703A).